The following is a 345-amino-acid chain: S-adenosylmethionine:tRNA ribosyltransferase-isomerase (345 aa).

This sequence belongs to the QueA family. In terms of assembly, monomer.

It is found in the cytoplasm. It carries out the reaction 7-aminomethyl-7-carbaguanosine(34) in tRNA + S-adenosyl-L-methionine = epoxyqueuosine(34) in tRNA + adenine + L-methionine + 2 H(+). It functions in the pathway tRNA modification; tRNA-queuosine biosynthesis. In terms of biological role, transfers and isomerizes the ribose moiety from AdoMet to the 7-aminomethyl group of 7-deazaguanine (preQ1-tRNA) to give epoxyqueuosine (oQ-tRNA). This Lactococcus lactis subsp. lactis (strain IL1403) (Streptococcus lactis) protein is S-adenosylmethionine:tRNA ribosyltransferase-isomerase.